Consider the following 585-residue polypeptide: ATP-dependent lipid A-core flippase (585 aa).

5 consecutive transmembrane segments (helical) span residues 16–36, 66–86, 156–176, 252–272, and 278–298; these read LWPY…ALII, FLSM…ASGF, IIGL…ILLV, AIAN…VLVL, and LRAE…FGLM. An ABC transmembrane type-1 domain is found at 29–313; that stretch reads VAVVALIINA…LTNVTSQFQR (285 aa). Positions 345 to 581 constitute an ABC transporter domain; sequence IQVKNVTFTY…DGAYAQLHRI (237 aa). 379-386 contacts ATP; sequence GRSGSGKS.

This sequence belongs to the ABC transporter superfamily. Lipid exporter (TC 3.A.1.106) family. Homodimer.

The protein localises to the cell inner membrane. It catalyses the reaction ATP + H2O + lipid A-core oligosaccharideSide 1 = ADP + phosphate + lipid A-core oligosaccharideSide 2.. Involved in lipopolysaccharide (LPS) biosynthesis. Translocates lipid A-core from the inner to the outer leaflet of the inner membrane. Transmembrane domains (TMD) form a pore in the inner membrane and the ATP-binding domain (NBD) is responsible for energy generation. The sequence is that of ATP-dependent lipid A-core flippase from Photobacterium profundum (strain SS9).